The primary structure comprises 303 residues: GPN-loop GTPase 2 (303 aa).

29 to 34 serves as a coordination point for GTP; it reads GSGKST. The Gly-Pro-Asn (GPN)-loop; involved in dimer interface signature appears at 85–87; the sequence is GPN. Residue 187–190 participates in GTP binding; sequence SKMD.

Belongs to the GPN-loop GTPase family. In terms of assembly, heterodimers with gpn1 or gpn3. Binds to RNA polymerase II (RNAPII).

Small GTPase required for proper localization of RNA polymerase II and III (RNAPII and RNAPIII). May act at an RNAP assembly step prior to nuclear import. In Xenopus tropicalis (Western clawed frog), this protein is GPN-loop GTPase 2.